The following is a 152-amino-acid chain: Large ribosomal subunit protein uL30 (152 aa).

It belongs to the universal ribosomal protein uL30 family. In terms of assembly, part of the 50S ribosomal subunit.

The sequence is that of Large ribosomal subunit protein uL30 from Methanobrevibacter smithii (strain ATCC 35061 / DSM 861 / OCM 144 / PS).